The following is a 326-amino-acid chain: Undecaprenyl-diphosphatase (326 aa).

Transmembrane regions (helical) follow at residues 11-31 (AFSL…IAVA), 42-62 (TGVI…LGFI), 90-110 (GVAF…WYFW), 138-158 (LGIG…KLLV), 165-185 (FFRS…LLAL), 212-232 (ALAL…GLFI), 242-262 (FSFL…LKGL), 272-292 (ILPL…AIAW), and 304-324 (IFVW…GMGF).

This sequence belongs to the UppP family.

It localises to the cell inner membrane. The catalysed reaction is di-trans,octa-cis-undecaprenyl diphosphate + H2O = di-trans,octa-cis-undecaprenyl phosphate + phosphate + H(+). Its function is as follows. Catalyzes the dephosphorylation of undecaprenyl diphosphate (UPP). Confers resistance to bacitracin. The protein is Undecaprenyl-diphosphatase of Synechocystis sp. (strain ATCC 27184 / PCC 6803 / Kazusa).